Consider the following 245-residue polypeptide: 1-(5-phosphoribosyl)-5-[(5-phosphoribosylamino)methylideneamino] imidazole-4-carboxamide isomerase (245 aa).

Residue Asp-7 is the Proton acceptor of the active site. The active-site Proton donor is the Asp-129.

The protein belongs to the HisA/HisF family.

The protein resides in the cytoplasm. It carries out the reaction 1-(5-phospho-beta-D-ribosyl)-5-[(5-phospho-beta-D-ribosylamino)methylideneamino]imidazole-4-carboxamide = 5-[(5-phospho-1-deoxy-D-ribulos-1-ylimino)methylamino]-1-(5-phospho-beta-D-ribosyl)imidazole-4-carboxamide. The protein operates within amino-acid biosynthesis; L-histidine biosynthesis; L-histidine from 5-phospho-alpha-D-ribose 1-diphosphate: step 4/9. This Psychromonas ingrahamii (strain DSM 17664 / CCUG 51855 / 37) protein is 1-(5-phosphoribosyl)-5-[(5-phosphoribosylamino)methylideneamino] imidazole-4-carboxamide isomerase.